The primary structure comprises 121 residues: Basic phospholipase A2 caudoxin (121 aa).

7 cysteine pairs are disulfide-bonded: C25–C114, C27–C43, C42–C94, C48–C121, C49–C87, C56–C80, and C74–C85. Positions 26, 28, and 30 each coordinate Ca(2+). H46 is a catalytic residue. D47 is a binding site for Ca(2+). D88 is a catalytic residue.

It belongs to the phospholipase A2 family. Group II subfamily. D49 sub-subfamily. Monomer. Ca(2+) is required as a cofactor. As to expression, expressed by the venom gland.

Its subcellular location is the secreted. It catalyses the reaction a 1,2-diacyl-sn-glycero-3-phosphocholine + H2O = a 1-acyl-sn-glycero-3-phosphocholine + a fatty acid + H(+). Snake venom phospholipase A2 (PLA2) that shows anticoagulant activity and presynaptic neurotoxicity. Acts as an anticoagulant toxin by inhibiting prothrombinase complex formation. Shows about 50% of the prothrombinase complex inhibition compared to CM-IV of N.nigricollis venom. Acts as a neurotoxin by inhibiting neuromuscular transmission by blocking acetylcholine release from the nerve termini. PLA2 catalyzes the calcium-dependent hydrolysis of the 2-acyl groups in 3-sn-phosphoglycerides. This Bitis caudalis (Horned adder) protein is Basic phospholipase A2 caudoxin.